The following is a 420-amino-acid chain: Gamma-glutamyl phosphate reductase (420 aa).

The protein belongs to the gamma-glutamyl phosphate reductase family.

It is found in the cytoplasm. It carries out the reaction L-glutamate 5-semialdehyde + phosphate + NADP(+) = L-glutamyl 5-phosphate + NADPH + H(+). The protein operates within amino-acid biosynthesis; L-proline biosynthesis; L-glutamate 5-semialdehyde from L-glutamate: step 2/2. Functionally, catalyzes the NADPH-dependent reduction of L-glutamate 5-phosphate into L-glutamate 5-semialdehyde and phosphate. The product spontaneously undergoes cyclization to form 1-pyrroline-5-carboxylate. This chain is Gamma-glutamyl phosphate reductase, found in Streptococcus pneumoniae serotype 4 (strain ATCC BAA-334 / TIGR4).